Here is a 384-residue protein sequence, read N- to C-terminus: Putative pectate lyase 2 (384 aa).

An N-terminal signal peptide occupies residues 1 to 23 (MASLFLTIISLLFAAFSSSVVEA). The Ca(2+) site is built by aspartate 182, aspartate 206, and aspartate 210. Arginine 262 is a catalytic residue.

It belongs to the polysaccharide lyase 1 family. Ca(2+) serves as cofactor.

It carries out the reaction Eliminative cleavage of (1-&gt;4)-alpha-D-galacturonan to give oligosaccharides with 4-deoxy-alpha-D-galact-4-enuronosyl groups at their non-reducing ends.. It functions in the pathway glycan metabolism; pectin degradation; 2-dehydro-3-deoxy-D-gluconate from pectin: step 2/5. This chain is Putative pectate lyase 2, found in Arabidopsis thaliana (Mouse-ear cress).